A 404-amino-acid chain; its full sequence is Putative glutamate--cysteine ligase 2 (404 aa).

The tract at residues 377–404 (GPAGKRAHEGGRSFRPAAGAPMSIRGQE) is disordered.

It belongs to the glutamate--cysteine ligase type 2 family. YbdK subfamily.

It carries out the reaction L-cysteine + L-glutamate + ATP = gamma-L-glutamyl-L-cysteine + ADP + phosphate + H(+). In terms of biological role, ATP-dependent carboxylate-amine ligase which exhibits weak glutamate--cysteine ligase activity. In Pseudomonas aeruginosa (strain UCBPP-PA14), this protein is Putative glutamate--cysteine ligase 2.